The sequence spans 166 residues: Small ribosomal subunit protein uS5 (166 aa).

The S5 DRBM domain maps to 11–74 (LQEKLVAVNR…EQARRNMVKV (64 aa)).

This sequence belongs to the universal ribosomal protein uS5 family. As to quaternary structure, part of the 30S ribosomal subunit. Contacts proteins S4 and S8.

With S4 and S12 plays an important role in translational accuracy. Its function is as follows. Located at the back of the 30S subunit body where it stabilizes the conformation of the head with respect to the body. The polypeptide is Small ribosomal subunit protein uS5 (Tolumonas auensis (strain DSM 9187 / NBRC 110442 / TA 4)).